The primary structure comprises 348 residues: Aminotransferase atnJ (348 aa).

R79 is a binding site for pyridoxal 5'-phosphate. Residue K180 is modified to N6-(pyridoxal phosphate)lysine. Position 216 (E216) interacts with pyridoxal 5'-phosphate.

The protein belongs to the class-IV pyridoxal-phosphate-dependent aminotransferase family. The cofactor is pyridoxal 5'-phosphate.

Its pathway is secondary metabolite biosynthesis. Its function is as follows. Aminotransferase; part of the gene cluster that mediates the biosynthesis of aspercryptins, linear lipopeptides built from six amino acids including 2 highly unusual and nonproteogenic amino acids, 2-amino-octanoic acid (2aoa) and 2-amino-dodecanol (2adol). The core structure of aspercryptins is as follows: Ser/Ala-Thr-Ile/Val-2aoa-Asn-2adol. The first step of aspercryptin biosynthesis is the generation of the fatty acid precursors, octanoic and dodecanoic acids, by the FAS subunits atnF and atnM. The fatty acid precursors are likely transformed into the corresponding alpha-amino fatty acids in three steps. First, they are hydroxylated by the cytochrome P450 monooxygenase atnE, then oxidized to the corresponding alpha-keto acids by the NAD(P)-dependent oxidoreductase atnD, and finally converted to the alpha-amino fatty acids by the PLP-dependent aminotransferases atnH or atnJ. the alpha-amino fatty acids, 2-amino-octanoic and 2-amino-dodecanoic acids, are recognized, activated, and covalently tethered to the NRPS atnA by its fourth and sixth adenylation domains. The second module of atnA is the Thr module and contains an epimerase (E) domain responsible for the epimerization of Thr to D-allo-Thr. Additionally, despite atnA having only one epimerase domain, the first amino acid of aspercryptin A1 is D-Ser, suggesting that serine is either loaded directly as D-Ser on the first module or that the epimerase domain in the threonine module epimerizes both L-Ser and L-Thr. After condensation of the hexapeptide of aspercryptin, the C-terminal reductase (TE) domain might be involved in the reductive release and production of the aldehyde hexapeptide. Further reduction would generate aspercryptins. The variety of aspercryptins produced reflects the flexibility of the atnA NRPS, allowing incorporation of alanine instead of serine, valine for isoleucine, and a C10 fatty amino alcohol instead of the C12 version. AtnB seems to be involved in the selectivity for Ile versus Val by the third module. Moreover, type B, C and D aspercryptins have an additional N-terminal cichorine, acetyl and propionyl group respectively. The protein is Aminotransferase atnJ of Emericella nidulans (strain FGSC A4 / ATCC 38163 / CBS 112.46 / NRRL 194 / M139) (Aspergillus nidulans).